The following is a 203-amino-acid chain: Outer-membrane lipoprotein carrier protein (203 aa).

A signal peptide spans 1-21 (MKKLAITCALLSGMVVSQVWA).

This sequence belongs to the LolA family. Monomer.

It is found in the periplasm. Functionally, participates in the translocation of lipoproteins from the inner membrane to the outer membrane. Only forms a complex with a lipoprotein if the residue after the N-terminal Cys is not an aspartate (The Asp acts as a targeting signal to indicate that the lipoprotein should stay in the inner membrane). The chain is Outer-membrane lipoprotein carrier protein from Klebsiella pneumoniae subsp. pneumoniae (strain ATCC 700721 / MGH 78578).